A 517-amino-acid polypeptide reads, in one-letter code: MAFRKSNVYLSLVNSYIIDSPQPSSINYWWNMGSLLGLCLVIQIVTGIFMAMHYSSNIELAFSSVEHIMRDVHNGYILRYLHANGASFFFMVMFMHMAKGLYYGSYRSPRVTLWNVGVIIFILTIATAFLGYCCVYGQMSHWGATVITNLFSAIPFVGNDIVSWLWGGFNMEDPYYSNMMLNKSVLCWNIFIWMMNYYIIQLIIYNNMIWNKNNMVKMFIMRRKLAVINMYMYMKLIIQRTYSYYMNNTIIYDKNHKLNTDNPIYAYIGGLFEGDGWITISKKGKYLLYELGIEMHIRDIQLLYKIKNILGIGKVTIKKLKMKDGTIKEMCKFNVRNKNHLKNIIIPIFDKYPMLTNKHYDYLYFKDNLLKDIKYYNDLSYYLRPIKPFNTTEDILNKNYFSSWLIGFFEAESCFSIYKPMNKKMKTASFEVSQNNSMEVMLAIKSYLKITQNIYTDKFNNSRMTTKSINGIKNVVMFINNNPIKLLGYKKLQYLLFLKDLRTITKYNNYFKIPPKY.

The Mitochondrial matrix portion of the chain corresponds to Met1–Asn31. The interval Met1–Phe169 is cytochrome b. The helical transmembrane segment at Met32–Met52 threads the bilayer. Over His53–Asn84 the chain is Mitochondrial intermembrane. Residues Gly85–Ser105 form a helical membrane-spanning segment. The Mitochondrial matrix segment spans residues Tyr106–Asn115. The helical transmembrane segment at Val116–Tyr136 threads the bilayer. The Mitochondrial intermembrane portion of the chain corresponds to Gly137–Thr145. A helical transmembrane segment spans residues Val146 to Trp166. Residues Gly167–Ser184 are Mitochondrial matrix-facing. Positions Asn170 to Tyr517 are maturase. Residues Val185–Tyr205 form a helical membrane-spanning segment. At Asn206–Lys224 the chain is on the mitochondrial intermembrane side. A helical membrane pass occupies residues Leu225–Tyr242. Residues Ser243–Tyr517 lie on the Mitochondrial matrix side of the membrane.

The protein in the N-terminal section; belongs to the cytochrome b family. In the C-terminal section; belongs to the LAGLIDADG endonuclease family. In terms of assembly, forms a ribonucleoprotein complex composed of maturase bI3 and 2 dimers of MRS1 that assemble around the bI3 RNA.

It localises to the mitochondrion inner membrane. Its function is as follows. Mitochondrial mRNA maturase required for splicing of intron 3 of the cytochrome b (COB) gene, containing its own coding sequence. In vivo splicing requires the formation of a ribonucleoprotein complex together with the imported mitochondrial RNA-splicing protein MRS1. The complex seems to stimulate the intrinsic ribozyme activity of intron bI3 through binding to and stabilizing specific secondary and tertiary structure elements in the RNA. The sequence is that of Cytochrome b mRNA maturase bI3 (BI3) from Saccharomyces cerevisiae (strain ATCC 204508 / S288c) (Baker's yeast).